Consider the following 85-residue polypeptide: Delta/kappa-theraphotoxin-Pm1a (85 aa).

The N-terminal stretch at 1–19 is a signal peptide; sequence MKTFVFIVLVALAFVLTAA. Positions 20–43 are excised as a propeptide; it reads KEERANPSELVSALAELVMLDAER. Intrachain disulfides connect Cys50–Cys64, Cys57–Cys69, and Cys63–Cys77.

The protein belongs to the neurotoxin 10 (Hwtx-1) family. Expressed by the venom gland.

It localises to the secreted. In terms of biological role, multimodal toxin that enhances nociceptor excitability mainly by the simultaneous stimulation of repetitive firing (through Nav1.8/SCN10A channel current enhancement) and impairment of repolarization (by inhibiting delayed rectifier current of Kv2.1/KCNB1), with a potential contribution from tetrodotoxin-sensitive voltage-gated sodium channels (Nav) modified excitability. Enhances Nav1.8/SCN10A currents (EC(50)=1.1 uM), modifies the channel gating by a right-shift in steady-state inactivation and delays open-state inactivation. Also decreases Kv2.1/KCNB1 currents (IC(50)=0.43 uM) and causes a depolarizing shift in the voltage dependence of activation without change in steady-state inactivation. In addition, inhibits peak currents of human sodium channels (Nav1.1 to Nav1.7, IC(50)=0.38-2.3 uM) and delays fast inactivation of Nav1.1/SCN1A, Nav1.3/SCN3A, Nav1.6/SCN8A, and Nav1.7/SCN9A. In small dorsal root ganglion neurons, induces hyperexcitability by enhancing tetrodotoxin-resistant sodium currents, impairing repolarization and lowering the threshold of action potential firing, consistent with the severe pain associated with envenomation. In vivo, elicits nocifensive behavior in mice after intraplantar injection. The polypeptide is Delta/kappa-theraphotoxin-Pm1a (Pelinobius muticus (King baboon spider)).